The sequence spans 329 residues: Phosphate import ATP-binding protein PstB (329 aa).

Residues phenylalanine 83 to isoleucine 325 enclose the ABC transporter domain. Glycine 116 to serine 123 is a binding site for ATP.

The protein belongs to the ABC transporter superfamily. Phosphate importer (TC 3.A.1.7) family. In terms of assembly, the complex is composed of two ATP-binding proteins (PstB), two transmembrane proteins (PstC and PstA) and a solute-binding protein (PstS).

The protein resides in the cell membrane. The enzyme catalyses phosphate(out) + ATP + H2O = ADP + 2 phosphate(in) + H(+). Functionally, part of the ABC transporter complex PstSACB involved in phosphate import. Responsible for energy coupling to the transport system. This Mycoplasma genitalium (strain ATCC 33530 / DSM 19775 / NCTC 10195 / G37) (Mycoplasmoides genitalium) protein is Phosphate import ATP-binding protein PstB.